Consider the following 109-residue polypeptide: Oncomodulin-1 (109 aa).

Residue serine 2 is modified to N-acetylserine. EF-hand domains lie at 39 to 74 (MSAN…FESG) and 78 to 109 (LTES…MVHS). The Ca(2+) site is built by aspartate 52, aspartate 54, serine 56, tyrosine 58, glutamate 63, aspartate 91, aspartate 93, aspartate 95, lysine 97, and glutamate 102.

Belongs to the parvalbumin family.

In terms of biological role, has some calmodulin-like activity with respect to enzyme activation and growth regulation. Binds two calcium ions. The protein is Oncomodulin-1 (OCM) of Homo sapiens (Human).